The chain runs to 444 residues: Glutamate-1-semialdehyde 2,1-aminomutase (444 aa).

K267 bears the N6-(pyridoxal phosphate)lysine mark.

This sequence belongs to the class-III pyridoxal-phosphate-dependent aminotransferase family. HemL subfamily. Homodimer. Pyridoxal 5'-phosphate serves as cofactor.

The protein resides in the cytoplasm. The enzyme catalyses (S)-4-amino-5-oxopentanoate = 5-aminolevulinate. It participates in porphyrin-containing compound metabolism; protoporphyrin-IX biosynthesis; 5-aminolevulinate from L-glutamyl-tRNA(Glu): step 2/2. The chain is Glutamate-1-semialdehyde 2,1-aminomutase from Xylella fastidiosa (strain Temecula1 / ATCC 700964).